The chain runs to 836 residues: Zinc fingers and homeoboxes protein 2 (836 aa).

The interval 24 to 58 is disordered; that stretch reads LEEADRAKDKGLGVPPSDVSKERWAAEPEPSSKES. Positions 27–77 are interaction with EFNB1; that stretch reads ADRAKDKGLGVPPSDVSKERWAAEPEPSSKESEVVEVRSVGESQSKKLQGG. Over residues 42-58 the composition is skewed to basic and acidic residues; the sequence is VSKERWAAEPEPSSKES. C2H2-type zinc fingers lie at residues 78–101 and 110–133; these read YECK…DMQH and YVCA…SKFH. The tract at residues 168–210 is disordered; it reads SAPGSSDNDPGVSVGKTATVKTGKQKADAKKVPKKPDEAAPDN. Basic and acidic residues predominate over residues 192-210; the sequence is QKADAKKVPKKPDEAAPDN. The interval 195 to 358 is required for homodimerization; sequence DAKKVPKKPD…PAQLTPTKVS (164 aa). DNA-binding regions (homeobox) lie at residues 263 to 324, 439 to 501, 530 to 591, and 628 to 690; these read NTTK…WSPE, TPAS…IVHI, AQKF…EQAV, and SPSS…TLSW. A required for repressor activity region spans residues 263-446; sequence NTTKYNSALD…PLTPASDRKK (184 aa). Residues 263–497 are required for interaction with NFYA; it reads NTTKYNSALD…SDHRYRCQRG (235 aa). A required for nuclear localization region spans residues 317-446; sequence HGISWSPEEV…PLTPASDRKK (130 aa). A disordered region spans residues 404-442; it reads GQKRPLVTPQAAPEPKRPHIAQVPEPPPKVANTPLTPAS. A Glycyl lysine isopeptide (Lys-Gly) (interchain with G-Cter in SUMO2) cross-link involves residue Lys-455. Composition is skewed to basic and acidic residues over residues 700–709 and 730–746; these read SDDHGHDVAS and YAKD…EKLV. The tract at residues 700–836 is disordered; it reads SDDHGHDVAS…DSTPAEAGQA (137 aa). Residues Ser-824 and Ser-826 each carry the phosphoserine modification.

It belongs to the ZHX family. Homodimer (via homeobox domain 1). Heterodimer with ZHX1 (via homeobox domain 1). Heterodimer with ZHX3 (via homeobox domain 1). Heterodimerization with ZHX1 is not necessary for repressor activity. Interacts (via homeobox domain) with NFYA (via N-terminus). Interacts with EFNB1 intracellular domain peptide; the interaction enhances ZHX2 transcriptional repression activity.

The protein resides in the nucleus. Its function is as follows. Acts as a transcriptional repressor. Represses the promoter activity of the CDC25C gene stimulated by NFYA. May play a role in retinal development where it regulates the composition of bipolar cell populations, by promoting differentiation of bipolar OFF-type cells. In the brain, may promote maintenance and suppress differentiation of neural progenitor cells in the developing cortex. The polypeptide is Zinc fingers and homeoboxes protein 2 (Zhx2) (Rattus norvegicus (Rat)).